Reading from the N-terminus, the 154-residue chain is RxLR effector protein PexRD24 (154 aa).

The N-terminal stretch at 1-22 (MHSSLLWLGAVVALLAVNNVTA) is a signal peptide. The RxLR-dEER motif lies at 53–67 (RSLRAVETSEDEEER). Position 138 (Lys-138) is a short sequence motif, PP1c-binding motif.

Belongs to the RxLR effector family. Interacts with the potato PP1c family proteins PP1c-1, PP1c-2 and PP1c-3.

The protein resides in the secreted. The protein localises to the host nucleus. It localises to the host nucleoplasm. Its subcellular location is the host nucleolus. Effector that interacts with isoforms of host protein phosphatase type 1c (PP1c), mimicking a regulatory subunit and causing their re-localization within the host nucleus. The holoenzymes formed with PP1c isoforms act to promote late blight by attenuating jasmonic acid (JA)- and salicylic acid (SA)-mediated transcriptional responses of the host plant. The chain is RxLR effector protein PexRD24 from Phytophthora infestans (strain T30-4) (Potato late blight agent).